The chain runs to 42 residues: uncharacterized protein (42 aa).

The tract at residues methionine 1–histidine 42 is disordered. Residues serine 32 to histidine 42 are compositionally biased toward pro residues.

This is an uncharacterized protein from Schizosaccharomyces pombe (strain 972 / ATCC 24843) (Fission yeast).